The chain runs to 649 residues: Mitochondrial Rho GTPase 1 (649 aa).

The Cytoplasmic segment spans residues 1 to 623 (MTKETIRVVI…KPTNIDYSSA (623 aa)). Residues 3-176 (KETIRVVICG…FYLCQRSISY (174 aa)) enclose the Miro 1 domain. GTP is bound by residues 12 to 19 (GDDGVGKT), 61 to 63 (DTD), and 115 to 118 (NKCD). EF-hand domains follow at residues 192–227 (SAVA…CFGK) and 320–355 (KGYR…TPGL). Ca(2+) contacts are provided by Asp205, Asp207, Asp209, Glu216, Asp333, Asp335, Asp337, and Glu344. The 166-residue stretch at 436–601 (RKVFNCFVVG…FKKIIQASLE (166 aa)) folds into the Miro 2 domain. GTP is bound by residues 445–452 (GKRNSGKS), 481–485 (EVTGD), and 550–553 (LKAD). Residues 624-644 (VILGSSIGFLALFSYTMIKLL) form a helical; Anchor for type IV membrane protein membrane-spanning segment. Residues 645 to 649 (KPTQQ) lie on the Mitochondrial intermembrane side of the membrane.

The protein belongs to the mitochondrial Rho GTPase family.

The protein localises to the mitochondrion outer membrane. Functionally, mitochondrial GTPase involved in mitochondrial trafficking. Probably involved in control of anterograde transport of mitochondria and their subcellular distribution. This Candida glabrata (strain ATCC 2001 / BCRC 20586 / JCM 3761 / NBRC 0622 / NRRL Y-65 / CBS 138) (Yeast) protein is Mitochondrial Rho GTPase 1 (GEM1).